Reading from the N-terminus, the 224-residue chain is LexA repressor (224 aa).

The segment at residues Ile-38 to Arg-58 is a DNA-binding region (H-T-H motif). Over residues Asn-71–Asp-82 the composition is skewed to basic and acidic residues. The tract at residues Asn-71–Ser-96 is disordered. Active-site for autocatalytic cleavage activity residues include Ser-148 and Lys-185.

It belongs to the peptidase S24 family. In terms of assembly, homodimer.

The enzyme catalyses Hydrolysis of Ala-|-Gly bond in repressor LexA.. In terms of biological role, represses a number of genes involved in the response to DNA damage (SOS response), including recA and lexA. In the presence of single-stranded DNA, RecA interacts with LexA causing an autocatalytic cleavage which disrupts the DNA-binding part of LexA, leading to derepression of the SOS regulon and eventually DNA repair. In Mycobacteroides abscessus (strain ATCC 19977 / DSM 44196 / CCUG 20993 / CIP 104536 / JCM 13569 / NCTC 13031 / TMC 1543 / L948) (Mycobacterium abscessus), this protein is LexA repressor.